The chain runs to 398 residues: MALKKKEFNKKLKHFTINFGPQHPAAHGVLRLILELNGEVVQRADPHIGLLHRGTEKLIEAKTYFQALPYFDRLDYVSMMCQEHTYALSVENLLQVSIPRRAQFIRVLFAEITRILNHLLAVGCHAMDVGAMTPFLWAFEEREKLMEFYERVSGARMHASYFRPGGVSQDISVGLVDDIFAFVAQFGQRLDEIEEMLTDNRIWQERLVDIGVVSAQEAIDWGFSGVMLRGSGIRWDLRKNEPYEIYSDLNFQGVVGKTGDCYDRYLARVEEMRQSLSIIYQCLNKMPRGSVKIDDAKISPPSRSEVKQSMESLIHHFKLYTEGVFVPAGETYTATEAPKGEFGVYLVSKGSSRPYRCKIKAPGFSHLQGLNFMACSHMLADVVTIIGTQDIVFGEVDR.

The protein belongs to the complex I 49 kDa subunit family.

It is found in the mitochondrion. It carries out the reaction a ubiquinone + NADH + 5 H(+)(in) = a ubiquinol + NAD(+) + 4 H(+)(out). Its function is as follows. Core subunit of the mitochondrial membrane respiratory chain NADH dehydrogenase (Complex I) that is believed to belong to the minimal assembly required for catalysis. Complex I functions in the transfer of electrons from NADH to the respiratory chain. The immediate electron acceptor for the enzyme is believed to be ubiquinone. Component of the iron-sulfur (IP) fragment of the enzyme. Component of the iron-sulfur (IP) fragment of the enzyme. This is NADH-ubiquinone oxidoreductase 49 kDa subunit (NAD7) from Pylaiella littoralis (Seaweed).